Consider the following 172-residue polypeptide: Shikimate kinase 2 (172 aa).

9–16 (GARAAGKT) lines the ATP pocket.

The protein belongs to the shikimate kinase family.

It localises to the cytoplasm. The catalysed reaction is shikimate + ATP = 3-phosphoshikimate + ADP + H(+). It participates in metabolic intermediate biosynthesis; chorismate biosynthesis; chorismate from D-erythrose 4-phosphate and phosphoenolpyruvate: step 5/7. In Syntrophotalea carbinolica (strain DSM 2380 / NBRC 103641 / GraBd1) (Pelobacter carbinolicus), this protein is Shikimate kinase 2.